We begin with the raw amino-acid sequence, 436 residues long: tRNA(Ile)-lysidine synthase (436 aa).

27 to 32 contacts ATP; sequence SGGVDS.

It belongs to the tRNA(Ile)-lysidine synthase family.

The protein localises to the cytoplasm. The enzyme catalyses cytidine(34) in tRNA(Ile2) + L-lysine + ATP = lysidine(34) in tRNA(Ile2) + AMP + diphosphate + H(+). In terms of biological role, ligates lysine onto the cytidine present at position 34 of the AUA codon-specific tRNA(Ile) that contains the anticodon CAU, in an ATP-dependent manner. Cytidine is converted to lysidine, thus changing the amino acid specificity of the tRNA from methionine to isoleucine. This is tRNA(Ile)-lysidine synthase from Vibrio vulnificus (strain CMCP6).